The chain runs to 434 residues: MDLYIQIIVVACLTGMTSLLAHRSAAVFHDGIRPILPQLIEGYMNRREAGSIAFGLSIGFVASVGISFTLKTGLLNAWLLFLPTDILGVLAINSLMAFGLGAIWGVLILTCLLPVNQLLTALPVDVLGSLGELSSPVVSAFALFPLVAIFYQFGWKQSLIAAVVVLMTRVVVVRYFPHLNPESIEIFIGMVMLLGIAITHDLRHRDENDIDASGLSVFEERTSRIIKNLPYIAIVGALIAAVASMKIFAGSEVSIFTLEKAYSAGVTPEQSQTLINQAALAEFMRGLGFVPLIATTALATGVYAVAGFTFVYAVDYLSPNPMVAAVLGAVVISAEVLLLRSIGKWLGRYPSVRNASDNIRNAMNMLMEVALLVGSIFAAIKMAGYTGFSIAVAIYFLNESLGRPVQKMAAPVVAVMITGILLNVLYWLGLFVPA.

Transmembrane regions (helical) follow at residues 50–70 (GSIAFGLSIGFVASVGISFTL), 72–92 (TGLLNAWLLFLPTDILGVLAI), 95–115 (LMAFGLGAIWGVLILTCLLPV), 135–155 (SPVVSAFALFPLVAIFYQFGW), 158–178 (SLIAAVVVLMTRVVVVRYFPH), 179–199 (LNPESIEIFIGMVMLLGIAIT), 229–249 (LPYIAIVGALIAAVASMKIFA), 288–308 (GFVPLIATTALATGVYAVAGF), 319–339 (PNPMVAAVLGAVVISAEVLLL), 376–396 (IFAAIKMAGYTGFSIAVAIYF), and 412–432 (VVAVMITGILLNVLYWLGLFV).

The protein resides in the cell membrane. This is an uncharacterized protein from Escherichia coli (strain K12).